The sequence spans 727 residues: Pre-B-cell leukemia transcription factor-interacting protein 1 (727 aa).

The span at 1–10 (MASCPDSDNS) shows a compositional bias: polar residues. Positions 1-169 (MASCPDSDNS…GREPSSSQPV (169 aa)) are disordered. Residues serine 131, serine 142, serine 143, and serine 144 each carry the phosphoserine modification. Threonine 148 is modified (phosphothreonine). Serine 164 bears the Phosphoserine mark. 2 coiled-coil regions span residues 270-350 (FLLD…RGVD) and 377-405 (DPSL…WQLL). Polar residues predominate over residues 446–456 (QGINTGRSPND). 2 disordered regions span residues 446 to 565 (QGIN…NSPD) and 694 to 727 (LKKR…YHQG). Basic and acidic residues predominate over residues 473 to 563 (WGGKEKWRGG…QKHSWGKDNS (91 aa)). Positions 486–506 (QKAEHWKPRKEESGQERQRSW) match the Nuclear localization signal motif. Serine 563 is subject to Phosphoserine. The short motif at 691-716 (DKALKKRSRKKEKHSWNPRVVGPREE) is the Nuclear localization signal element. Over residues 694-703 (LKKRSRKKEK) the composition is skewed to basic residues.

Interacts with ESR1, PBX1, PBX2 and PBX3. Interacts with TEX11.

It is found in the cytoplasm. Its subcellular location is the cytoskeleton. The protein resides in the nucleus. Regulator of pre-B-cell leukemia transcription factors (BPXs) function. Inhibits the binding of PBX1-HOX complex to DNA and blocks the transcriptional activity of E2A-PBX1. Tethers estrogen receptor-alpha (ESR1) to microtubules and allows them to influence estrogen receptors-alpha signaling. This chain is Pre-B-cell leukemia transcription factor-interacting protein 1 (Pbxip1), found in Mus musculus (Mouse).